The primary structure comprises 459 residues: Alpha,alpha-trehalose-phosphate synthase [UDP-forming] (459 aa).

The D-glucose 6-phosphate site is built by Y86 and D140. UDP is bound by residues R262 and K267. UDP-alpha-D-glucose is bound by residues R262 and K267. A D-glucose 6-phosphate-binding site is contributed by R300. 361–369 (DGMNLVALE) contributes to the UDP-alpha-D-glucose binding site. 365-369 (LVALE) lines the UDP pocket.

Belongs to the glycosyltransferase 20 family. In terms of assembly, component of the trehalose synthase complex.

The protein localises to the cytoplasm. It catalyses the reaction D-glucose 6-phosphate + UDP-alpha-D-glucose = alpha,alpha-trehalose 6-phosphate + UDP + H(+). In terms of biological role, synthase catalytic subunit of the trehalose synthase complex that catalyzes the production of trehalose from glucose-6-phosphate and UDP-alpha-D-glucose in a two step process. Can function independently of the complex. This is Alpha,alpha-trehalose-phosphate synthase [UDP-forming] (TPS1) from Encephalitozoon cuniculi (strain GB-M1) (Microsporidian parasite).